The following is a 173-amino-acid chain: Large ribosomal subunit protein bL17 (173 aa).

Residues 136–173 are disordered; the sequence is AEEEAPAVEAEATEATEAPVEEAAAVEAEAPADAEKAE. Acidic residues predominate over residues 138 to 149; that stretch reads EEAPAVEAEATE. The span at 150–166 shows a compositional bias: low complexity; the sequence is ATEAPVEEAAAVEAEAP.

The protein belongs to the bacterial ribosomal protein bL17 family. As to quaternary structure, part of the 50S ribosomal subunit. Contacts protein L32.

The protein is Large ribosomal subunit protein bL17 of Bifidobacterium longum subsp. infantis (strain ATCC 15697 / DSM 20088 / JCM 1222 / NCTC 11817 / S12).